A 320-amino-acid chain; its full sequence is Phosphate acetyltransferase (320 aa).

It belongs to the phosphate acetyltransferase and butyryltransferase family.

The protein resides in the cytoplasm. It carries out the reaction acetyl-CoA + phosphate = acetyl phosphate + CoA. It functions in the pathway metabolic intermediate biosynthesis; acetyl-CoA biosynthesis; acetyl-CoA from acetate: step 2/2. This chain is Phosphate acetyltransferase (pta), found in Mycoplasma pneumoniae (strain ATCC 29342 / M129 / Subtype 1) (Mycoplasmoides pneumoniae).